Reading from the N-terminus, the 266-residue chain is Dickkopf-related protein 1 (266 aa).

An N-terminal signal peptide occupies residues 1–31 (MMALGAAGATRVFVAMVAAALGGHPLLGVSA). An O-linked (GalNAc...) serine glycan is attached at serine 61. Intrachain disulfides connect cysteine 85–cysteine 97, cysteine 91–cysteine 111, cysteine 114–cysteine 128, cysteine 121–cysteine 133, cysteine 127–cysteine 138, cysteine 189–cysteine 201, cysteine 195–cysteine 210, cysteine 200–cysteine 237, cysteine 220–cysteine 245, and cysteine 239–cysteine 263. Positions 85–138 (CAEDEECGTDEYCASPTRGGDAGVQICLACRKRRKRCMRHAMCCPGNYCKNGIC) are DKK-type Cys-1. The interval 189 to 263 (CLRSSDCASG…ASNSSRLHTC (75 aa)) is DKK-type Cys-2. Residue asparagine 256 is glycosylated (N-linked (GlcNAc...) asparagine).

Belongs to the dickkopf family. As to quaternary structure, interacts with LRP6. Interacts (via the C-terminal Cys-rich domain) with LRP5 (via beta-propeller regions 3 and 4); the interaction, enhanced by MESD and or KREMEN, antagonizes Wnt-mediated signaling. Forms a ternary complex with LRP6 and KREM1. Interacts with KREM1. Placenta.

Its subcellular location is the secreted. Antagonizes canonical Wnt signaling by inhibiting LRP5/6 interaction with Wnt and by forming a ternary complex with the transmembrane protein KREMEN that promotes internalization of LRP5/6. DKKs play an important role in vertebrate development, where they locally inhibit Wnt regulated processes such as antero-posterior axial patterning, limb development, somitogenesis and eye formation. In the adult, Dkks are implicated in bone formation and bone disease, cancer and Alzheimer disease. Inhibits the pro-apoptotic function of KREMEN1 in a Wnt-independent manner, and has anti-apoptotic activity. This is Dickkopf-related protein 1 (DKK1) from Homo sapiens (Human).